A 280-amino-acid chain; its full sequence is Thiamine-phosphate synthase (280 aa).

Residues 1 to 64 (MGWSGSPLTL…ATGRGGLRMT (64 aa)) form a disordered region. The segment covering 42-55 (GRGELRSRERRGEA) has biased composition (basic and acidic residues). 4-amino-2-methyl-5-(diphosphooxymethyl)pyrimidine is bound by residues 104–108 (QLRCK) and N141. D142 and D161 together coordinate Mg(2+). Residue S179 coordinates 4-amino-2-methyl-5-(diphosphooxymethyl)pyrimidine. 205-207 (TPT) contacts 2-[(2R,5Z)-2-carboxy-4-methylthiazol-5(2H)-ylidene]ethyl phosphate. K208 contributes to the 4-amino-2-methyl-5-(diphosphooxymethyl)pyrimidine binding site. G236 is a 2-[(2R,5Z)-2-carboxy-4-methylthiazol-5(2H)-ylidene]ethyl phosphate binding site.

The protein belongs to the thiamine-phosphate synthase family. Mg(2+) serves as cofactor.

It carries out the reaction 2-[(2R,5Z)-2-carboxy-4-methylthiazol-5(2H)-ylidene]ethyl phosphate + 4-amino-2-methyl-5-(diphosphooxymethyl)pyrimidine + 2 H(+) = thiamine phosphate + CO2 + diphosphate. The catalysed reaction is 2-(2-carboxy-4-methylthiazol-5-yl)ethyl phosphate + 4-amino-2-methyl-5-(diphosphooxymethyl)pyrimidine + 2 H(+) = thiamine phosphate + CO2 + diphosphate. It catalyses the reaction 4-methyl-5-(2-phosphooxyethyl)-thiazole + 4-amino-2-methyl-5-(diphosphooxymethyl)pyrimidine + H(+) = thiamine phosphate + diphosphate. Its pathway is cofactor biosynthesis; thiamine diphosphate biosynthesis; thiamine phosphate from 4-amino-2-methyl-5-diphosphomethylpyrimidine and 4-methyl-5-(2-phosphoethyl)-thiazole: step 1/1. Condenses 4-methyl-5-(beta-hydroxyethyl)thiazole monophosphate (THZ-P) and 2-methyl-4-amino-5-hydroxymethyl pyrimidine pyrophosphate (HMP-PP) to form thiamine monophosphate (TMP). The protein is Thiamine-phosphate synthase of Deinococcus radiodurans (strain ATCC 13939 / DSM 20539 / JCM 16871 / CCUG 27074 / LMG 4051 / NBRC 15346 / NCIMB 9279 / VKM B-1422 / R1).